We begin with the raw amino-acid sequence, 448 residues long: Probable glucuronoxylan glucuronosyltransferase IRX7 (448 aa).

Residues 1–16 (MTTHKHRRTEKNLCFK) are Cytoplasmic-facing. Residues 17–37 (QYYKWILCFILTLYFFASFFV) form a helical; Signal-anchor for type II membrane protein membrane-spanning segment. The Lumenal segment spans residues 38-448 (DHDQDHRSST…RSVRRSNSFL (411 aa)). Residues Asn157, Asn189, Asn287, Asn397, and Asn438 are each glycosylated (N-linked (GlcNAc...) asparagine).

This sequence belongs to the glycosyltransferase 47 family. In terms of tissue distribution, expressed in developing interfascicular fibers and xylem cells in stems and developing secondary xylem in roots.

It is found in the golgi apparatus membrane. Its function is as follows. Involved in the synthesis of the hemicellulose glucuronoxylan, a major component of secondary cell walls. Probably involved in the synthesis of the glycosyl sequence at the glucuronoxylan reducing end. This chain is Probable glucuronoxylan glucuronosyltransferase IRX7 (IRX7), found in Arabidopsis thaliana (Mouse-ear cress).